We begin with the raw amino-acid sequence, 349 residues long: tRNA pseudouridine synthase D (349 aa).

Phenylalanine 27 is a substrate binding site. Aspartate 80 acts as the Nucleophile in catalysis. Asparagine 129 contributes to the substrate binding site. The TRUD domain maps to 155 to 303 (GVPNYFGPQR…VEAARRAMLL (149 aa)). Phenylalanine 329 is a substrate binding site.

It belongs to the pseudouridine synthase TruD family.

It catalyses the reaction uridine(13) in tRNA = pseudouridine(13) in tRNA. In terms of biological role, responsible for synthesis of pseudouridine from uracil-13 in transfer RNAs. The polypeptide is tRNA pseudouridine synthase D (Cronobacter sakazakii (strain ATCC BAA-894) (Enterobacter sakazakii)).